A 1412-amino-acid chain; its full sequence is DNA-directed RNA polymerase subunit beta (1412 aa).

This sequence belongs to the RNA polymerase beta chain family. In terms of assembly, the RNAP catalytic core consists of 2 alpha, 1 beta, 1 beta' and 1 omega subunit. When a sigma factor is associated with the core the holoenzyme is formed, which can initiate transcription.

The catalysed reaction is RNA(n) + a ribonucleoside 5'-triphosphate = RNA(n+1) + diphosphate. Functionally, DNA-dependent RNA polymerase catalyzes the transcription of DNA into RNA using the four ribonucleoside triphosphates as substrates. This is DNA-directed RNA polymerase subunit beta from Bdellovibrio bacteriovorus (strain ATCC 15356 / DSM 50701 / NCIMB 9529 / HD100).